An 85-amino-acid chain; its full sequence is Small ribosomal subunit protein eS27 (85 aa).

The C4-type zinc-finger motif lies at 38–60; it reads CHGCRTITTVFSHAQNVVICSSC.

It belongs to the eukaryotic ribosomal protein eS27 family. Zn(2+) is required as a cofactor.

The protein is Small ribosomal subunit protein eS27 (rps27) of Dictyostelium discoideum (Social amoeba).